A 364-amino-acid polypeptide reads, in one-letter code: MEPKCDHCATSQALIYCKSDLAKLCLNCDVHVHSANPLSHRHIRSLICEKCFSQPAAIRCLDEKVSYCQGCHWHESNCSELGHRVQSLNPFSGCPSPTDFNRMWSSILEPPVSGLLSPFVGSFPLNDLNNTMFDTAYSMVPHNISYTQNFSDNLSFFSTESKGYPDMVLKLEEGEEDLCEGLNLDDAPLNFDVGDDIIGCSSEVHIEPDHTVPNCLLIDKTNTSSFTGSNFTVDKALEASPPGQQMNINTGLQLPLSPVLFGQIHPSLNITGENNAADYQDCGMSPGFIMSEAPWETNFEVSCPQARNEAKLRYKEKKLKRSFGKQIRYASRKARADTRKRVKGRFVKAGDSYDYDPSSPTTNN.

4 residues coordinate Zn(2+): cysteine 5, cysteine 8, cysteine 28, and histidine 33. The segment at 5–47 (CDHCATSQALIYCKSDLAKLCLNCDVHVHSANPLSHRHIRSLI) adopts a B box-type 1; atypical zinc-finger fold. The B box-type 2; degenerate zinc-finger motif lies at 48–88 (CEKCFSQPAAIRCLDEKVSYCQGCHWHESNCSELGHRVQSL). The region spanning 280–322 (QDCGMSPGFIMSEAPWETNFEVSCPQARNEAKLRYKEKKLKRS) is the CCT domain.

It belongs to the CONSTANS family.

The protein resides in the nucleus. The sequence is that of Zinc finger protein CONSTANS-LIKE 12 (COL12) from Arabidopsis thaliana (Mouse-ear cress).